The chain runs to 158 residues: Transcription elongation factor GreA (158 aa).

Positions 53–73 (EQQGMVEARIRDIEAKLSNAQ) form a coiled coil.

It belongs to the GreA/GreB family.

In terms of biological role, necessary for efficient RNA polymerase transcription elongation past template-encoded arresting sites. The arresting sites in DNA have the property of trapping a certain fraction of elongating RNA polymerases that pass through, resulting in locked ternary complexes. Cleavage of the nascent transcript by cleavage factors such as GreA or GreB allows the resumption of elongation from the new 3'terminus. GreA releases sequences of 2 to 3 nucleotides. This chain is Transcription elongation factor GreA, found in Pseudomonas aeruginosa (strain ATCC 15692 / DSM 22644 / CIP 104116 / JCM 14847 / LMG 12228 / 1C / PRS 101 / PAO1).